Reading from the N-terminus, the 146-residue chain is Hemoglobin subunit beta-2 (146 aa).

The Globin domain occupies Glu-2–His-146. Heme b contacts are provided by His-63 and His-92.

It belongs to the globin family. In terms of assembly, hb 2 is a heterotetramer of two alpha-2 and two beta-2 chains. Red blood cells.

In terms of biological role, involved in oxygen transport from gills to the various peripheral tissues. The sequence is that of Hemoglobin subunit beta-2 (hbb2) from Gobionotothen gibberifrons (Humped rockcod).